Consider the following 233-residue polypeptide: MSQSNRELVVDFLSYKLSQKGYSWSQFSDVEENRTEAPEGTESEMETPSAINGNPSWHLADSPAVNGATGHSSSLDAREVIPMAAVKQALREAGDEFELRYRRAFSDLTSQLHITPGTAYQSFEQVVNELFRDGVNWGRIVAFFSFGGALCVESVDKEMQVLVSRIAAWMATYLNDHLEPWIQENGGWDTFVELYGNNAAAESRKGQERFNRWFLTGMTVAGVVLLGSLFSRK.

The BH4 motif lies at 4-24 (SNRELVVDFLSYKLSQKGYSW). The interval 28–71 (SDVEENRTEAPEGTESEMETPSAINGNPSWHLADSPAVNGATGH) is disordered. Ser49 is subject to Phosphoserine; by PLK3. Ser62 is subject to Phosphoserine; by CDK1. Residues 86–100 (VKQALREAGDEFELR) carry the BH3 motif. The BH1 signature appears at 129-148 (ELFRDGVNWGRIVAFFSFGG). The BH2 signature appears at 180–195 (PWIQENGGWDTFVELY). A helical membrane pass occupies residues 210-226 (FNRWFLTGMTVAGVVLL).

This sequence belongs to the Bcl-2 family. As to quaternary structure, homodimer. Interacts with BCL2L11. Interacts with BAD. Interacts with PGAM5. Interacts with HEBP2. Interacts with p53/TP53 and BBC3; interaction with BBC3 disrupts the interaction with p53/TP53. Interacts with ATP5F1A and ATP5F1B; the interactions mediate the association of isoform Bcl-X(L) with the mitochondrial membrane ATP synthase F(1)F(0) ATP synthase. Interacts with VDAC1. Interacts with BCL2L11 (via BH3). Interacts with RNF183. Interacts with GIMAP3/IAN4 and GIMAP5/IAN5. Interacts with GIMAP5 and HSPA8/HSC70; the interaction between HSPA8 and BCL2L1 is impaired in the absence of GIMAP5. Interacts with isoform 4 of CLU; this interaction releases and activates BAX and promotes cell death. In terms of assembly, forms heterodimers with BAX, BAK or BCL2; heterodimerization with BAX does not seem to be required for anti-apoptotic activity. Interacts with isoform 1 of SIVA1; the interaction inhibits the anti-apoptotic activity. Interacts with IKZF3. Interacts with RTL10/BOP. Interacts with DNM1L and CLTA; DNM1L and BCL2L1 isoform BCL-X(L) may form a complex in synaptic vesicles that also contains clathrin and MFF. Interacts (via the loop between motifs BH4 and BH3) with NLRP1 (via LRR repeats), but not with NLRP2, NLRP3, NLRP4, PYCARD, nor MEFV. Interacts with BECN1. Post-translationally, proteolytically cleaved by caspases during apoptosis. The cleaved protein, lacking the BH4 motif, has pro-apoptotic activity. Phosphorylated on Ser-62 by CDK1. This phosphorylation is partial in normal mitotic cells, but complete in G2-arrested cells upon DNA-damage, thus promoting subsequent apoptosis probably by triggering caspases-mediated proteolysis. Phosphorylated by PLK3, leading to regulate the G2 checkpoint and progression to cytokinesis during mitosis. Phosphorylation at Ser-49 appears during the S phase and G2, disappears rapidly in early mitosis during prometaphase, metaphase and early anaphase, and re-appears during telophase and cytokinesis. In terms of processing, ubiquitinated by RNF183 during prolonged ER stress, leading to degradation by the proteosome. As to expression, bcl-X(S) is expressed at high levels in cells that undergo a high rate of turnover, such as developing lymphocytes. In contrast, Bcl-X(L) is found in tissues containing long-lived postmitotic cells, such as adult brain.

The protein resides in the mitochondrion inner membrane. Its subcellular location is the mitochondrion outer membrane. It localises to the mitochondrion matrix. The protein localises to the cytoplasmic vesicle. It is found in the secretory vesicle. The protein resides in the synaptic vesicle membrane. Its subcellular location is the cytoplasm. It localises to the cytosol. The protein localises to the cytoskeleton. It is found in the microtubule organizing center. The protein resides in the centrosome. Its subcellular location is the nucleus membrane. Potent inhibitor of cell death. Inhibits activation of caspases. Appears to regulate cell death by blocking the voltage-dependent anion channel (VDAC) by binding to it and preventing the release of the caspase activator, CYC1, from the mitochondrial membrane. Also acts as a regulator of G2 checkpoint and progression to cytokinesis during mitosis. Functionally, isoform Bcl-X(L) also regulates presynaptic plasticity, including neurotransmitter release and recovery, number of axonal mitochondria as well as size and number of synaptic vesicle clusters. During synaptic stimulation, increases ATP availability from mitochondria through regulation of mitochondrial membrane ATP synthase F(1)F(0) activity and regulates endocytic vesicle retrieval in hippocampal neurons through association with DMN1L and stimulation of its GTPase activity in synaptic vesicles. May attenuate inflammation impairing NLRP1-inflammasome activation, hence CASP1 activation and IL1B release. In terms of biological role, isoform Bcl-X(S) promotes apoptosis. The protein is Bcl-2-like protein 1 (BCL2L1) of Homo sapiens (Human).